Consider the following 104-residue polypeptide: Zinc-containing ferredoxin-2 (104 aa).

An N-terminal extension region spans residues glycine 2–threonine 37. Residues histidine 17, histidine 20, and histidine 35 each coordinate Zn(2+). 4Fe-4S ferredoxin-type domains follow at residues isoleucine 38–threonine 66 and lysine 75–proline 104. Positions 46 and 52 each coordinate [3Fe-4S] cluster. Cysteine 56 serves as a coordination point for [4Fe-4S] cluster. Aspartate 77 is a Zn(2+) binding site. Residues cysteine 84, cysteine 87, and cysteine 90 each contribute to the [4Fe-4S] cluster site. [3Fe-4S] cluster is bound at residue cysteine 94.

It depends on [3Fe-4S] cluster as a cofactor. Requires [4Fe-4S] cluster as cofactor. Zn(2+) serves as cofactor.

Ferredoxins are iron-sulfur proteins that transfer electrons in a wide variety of metabolic reactions. In Sulfurisphaera tokodaii (strain DSM 16993 / JCM 10545 / NBRC 100140 / 7) (Sulfolobus tokodaii), this protein is Zinc-containing ferredoxin-2 (zfx2).